A 457-amino-acid polypeptide reads, in one-letter code: MLHVTRGVWGSIVRVWPLLPSFLGHSRALSSLEAKMGEYRKMWNPTEPRDWAQQYRERHIPFSKEQLLRLLIQEFHSTPAEKAALEEFTAHVDFCTLFHYHHVLTQLQALYDPINPDRETLDQPSLTDPQRLSNEKEVLQALEPLLAQANFSPLTEDTLAYALVVHHPQDEVQVTINLDQYIYMHFWALGQRVGKMPRKSSVGSKRFFFKSPPAERRYFKRVILAARTKKGHLVLKSFKDTPLEGLEQLLPELKVRTSTLQRAILNVTLIVSGVVFFVNVGMVVLSDLKMATSLLLLLFAAFMGLRAAKMFGHRRSAQALELAHMLYYRSTSNNAELLSALVLRAQDEHTKETLLAHSFLARRPGGAKGPPEETSQWLQSEVENWLLAQSGCDVAFNGKRALAHLQALPPTVGMYPPPGLPKLDLLATLSSPKSAPSDDNSLEKPLGPAQPSHLVGN.

A run of 2 helical transmembrane segments spans residues 264 to 284 (ILNVTLIVSGVVFFVNVGMVV) and 285 to 305 (LSDLKMATSLLLLLFAAFMGL). Phosphoserine is present on Ser-316. Over residues 429–439 (LSSPKSAPSDD) the composition is skewed to polar residues. The segment at 429 to 457 (LSSPKSAPSDDNSLEKPLGPAQPSHLVGN) is disordered.

It is found in the membrane. The polypeptide is Transmembrane protein 143 (TMEM143) (Bos taurus (Bovine)).